The chain runs to 289 residues: tRNA dimethylallyltransferase (289 aa).

Residue 9–16 (GTTASGKT) coordinates ATP. 11–16 (TASGKT) is a substrate binding site. Residues 34–37 (DSLC) are interaction with substrate tRNA.

The protein belongs to the IPP transferase family. Monomer. Mg(2+) serves as cofactor.

It carries out the reaction adenosine(37) in tRNA + dimethylallyl diphosphate = N(6)-dimethylallyladenosine(37) in tRNA + diphosphate. Catalyzes the transfer of a dimethylallyl group onto the adenine at position 37 in tRNAs that read codons beginning with uridine, leading to the formation of N6-(dimethylallyl)adenosine (i(6)A). The chain is tRNA dimethylallyltransferase from Campylobacter jejuni subsp. jejuni serotype O:23/36 (strain 81-176).